The sequence spans 228 residues: Protein ULTRAPETALA 2 (228 aa).

The SAND domain maps to 14 to 121 (EELQEISGVH…NKALKNSNVS (108 aa)).

Expressed in influorescence, pollen and siliques, with a higher expression in influorescence.

It localises to the cytoplasm. The protein resides in the nucleus. Putative transcription factor that acts as a key negative regulator of cell accumulation in shoot and floral meristems. Negatively regulates the size of the WUSCHEL (WUS)-expressing organizing center in inflorescence meristems. May act by down-regulating expression of WUS. Can compensate for mutant ULT1 protein when overexpressed. The protein is Protein ULTRAPETALA 2 (ULT2) of Arabidopsis thaliana (Mouse-ear cress).